We begin with the raw amino-acid sequence, 367 residues long: Glutamate 5-kinase (367 aa).

Residue K10 coordinates ATP. 3 residues coordinate substrate: S50, D137, and N149. Residues 169–170 (TD) and 211–217 (TGGMATK) each bind ATP. A PUA domain is found at 275 to 353 (AGEITVDDGA…QQISEILGYE (79 aa)).

Belongs to the glutamate 5-kinase family.

It localises to the cytoplasm. It catalyses the reaction L-glutamate + ATP = L-glutamyl 5-phosphate + ADP. It participates in amino-acid biosynthesis; L-proline biosynthesis; L-glutamate 5-semialdehyde from L-glutamate: step 1/2. In terms of biological role, catalyzes the transfer of a phosphate group to glutamate to form L-glutamate 5-phosphate. The sequence is that of Glutamate 5-kinase from Yersinia enterocolitica serotype O:8 / biotype 1B (strain NCTC 13174 / 8081).